The following is a 549-amino-acid chain: Chaperonin GroEL 5 (549 aa).

ATP contacts are provided by residues Thr-30 to Pro-33, Lys-51, Asp-87 to Thr-91, Gly-415, and Asp-495.

It belongs to the chaperonin (HSP60) family. As to quaternary structure, forms a cylinder of 14 subunits composed of two heptameric rings stacked back-to-back. Interacts with the co-chaperonin GroES.

It localises to the cytoplasm. It catalyses the reaction ATP + H2O + a folded polypeptide = ADP + phosphate + an unfolded polypeptide.. Its function is as follows. Together with its co-chaperonin GroES, plays an essential role in assisting protein folding. The GroEL-GroES system forms a nano-cage that allows encapsulation of the non-native substrate proteins and provides a physical environment optimized to promote and accelerate protein folding. This is Chaperonin GroEL 5 from Mesorhizobium japonicum (strain LMG 29417 / CECT 9101 / MAFF 303099) (Mesorhizobium loti (strain MAFF 303099)).